A 397-amino-acid chain; its full sequence is Keratinocyte differentiation factor 1 (397 aa).

The span at 1 to 16 shows a compositional bias: pro residues; sequence MPRPGQPRPSSGPPRL. Disordered stretches follow at residues 1–67, 124–158, and 191–214; these read MPRP…SAEP, EAAWAKEHNGVPPSPDRAPPSRRDGQKLKTSMGSS, and PLADPPPTRHSLPSTFTSSPRGSE. Residues 44–55 are compositionally biased toward basic and acidic residues; that stretch reads RPDPKDPGHHGP. Over residues 201-211 the composition is skewed to polar residues; the sequence is SLPSTFTSSPR. Residue serine 218 is modified to Phosphoserine. Disordered regions lie at residues 304 to 339 and 361 to 392; these read ISTRKSRSRPQTSEGRSARSTAPAAAPDSGHETMVG and ARKLRPYGAPGYPASQDSSFQGTDTDSSGAPL. Over residues 321 to 330 the composition is skewed to low complexity; the sequence is ARSTAPAAAP. Positions 375 to 388 are enriched in polar residues; it reads SQDSSFQGTDTDSS.

It localises to the cytoplasm. The protein resides in the cell junction. In terms of biological role, plays a role in the regulation of the epidermis formation during early development. Required both as an inhibitor of basal cell proliferation and a promoter of differentiation of basal progenitor cell progeny. The protein is Keratinocyte differentiation factor 1 (Kdf1) of Rattus norvegicus (Rat).